A 131-amino-acid chain; its full sequence is Histone H2A.1 (131 aa).

The residue at position 2 (Ser-2) is an N-acetylserine. N6-acetyllysine is present on residues Lys-4 and Lys-7. N5-methylglutamine is present on Gln-105. Residue Lys-126 forms a Glycyl lysine isopeptide (Lys-Gly) (interchain with G-Cter in SUMO) linkage. Residue Ser-128 is modified to Phosphoserine. Positions 128 to 129 (SQ) match the [ST]-Q motif motif.

It belongs to the histone H2A family. In terms of assembly, the nucleosome is a histone octamer containing two molecules each of H2A, H2B, H3 and H4 assembled in one H3-H4 heterotetramer and two H2A-H2B heterodimers. The octamer wraps approximately 147 bp of DNA. Phosphorylated to form H2AS128ph (gamma-H2A) in response to DNA double-strand breaks (DSBs) generated by exogenous genotoxic agents and by stalled replication forks. Phosphorylation is dependent on the DNA damage checkpoint kinases MEC1/ATR and TEL1/ATM, spreads on either side of a detected DSB site and may mark the surrounding chromatin for recruitment of proteins required for DNA damage signaling and repair. Gamma-H2A is removed from the DNA prior to the strand invasion-primer extension step of the repair process and subsequently dephosphorylated by PPH3, a component of the histone H2A phosphatase complex (HTP-C). Dephosphorylation is necessary for efficient recovery from the DNA damage checkpoint. In terms of processing, sumoylation on Lys-126 may lead to transcriptional repression. Post-translationally, acetylated by ESA1 to form H2AK4ac and H2AK7ac.

The protein localises to the nucleus. The protein resides in the chromosome. Core component of nucleosome which plays a central role in DNA double strand break (DSB) repair. Nucleosomes wrap and compact DNA into chromatin, limiting DNA accessibility to the cellular machineries which require DNA as a template. Histones thereby play a central role in transcription regulation, DNA repair, DNA replication and chromosomal stability. DNA accessibility is regulated via a complex set of post-translational modifications of histones, also called histone code, and nucleosome remodeling. The protein is Histone H2A.1 (HTA1) of Eremothecium gossypii (strain ATCC 10895 / CBS 109.51 / FGSC 9923 / NRRL Y-1056) (Yeast).